The chain runs to 273 residues: Large ribosomal subunit protein uL2 (273 aa).

Residues 224 to 260 form a disordered region; it reads AMNPVDHPHGGGEGKTSGGRHPVTPWGKKTKGKKTRK. Over residues 251–260 the composition is skewed to basic residues; the sequence is KKTKGKKTRK.

The protein belongs to the universal ribosomal protein uL2 family. As to quaternary structure, part of the 50S ribosomal subunit. Forms a bridge to the 30S subunit in the 70S ribosome.

One of the primary rRNA binding proteins. Required for association of the 30S and 50S subunits to form the 70S ribosome, for tRNA binding and peptide bond formation. It has been suggested to have peptidyltransferase activity; this is somewhat controversial. Makes several contacts with the 16S rRNA in the 70S ribosome. This chain is Large ribosomal subunit protein uL2, found in Orientia tsutsugamushi (strain Ikeda) (Rickettsia tsutsugamushi).